We begin with the raw amino-acid sequence, 646 residues long: Galactofuranosyltransferase GlfT2 (646 aa).

Positions 182, 211, 240, and 267 each coordinate UDP-alpha-D-galactofuranose. D267 and D269 together coordinate Mn(2+). Catalysis depends on D384, which acts as the Proton acceptor. A Mn(2+)-binding site is contributed by H408.

It belongs to the glycosyltransferase 2 family. In terms of assembly, homotetramer. The cofactor is Mn(2+). Mg(2+) serves as cofactor.

The protein localises to the cell membrane. The catalysed reaction is beta-D-galactofuranosyl-(1-&gt;5)-beta-D-galactofuranosyl-(1-&gt;4)-alpha-L-rhamnosyl-(1-&gt;3)-N-acetyl-alpha-D-glucosaminyl-diphospho-trans,octa-cis-decaprenol + 28 UDP-alpha-D-galactofuranose = [beta-D-galactofuranosyl-(1-&gt;5)-beta-D-galactofuranosyl-(1-&gt;6)]14-beta-D-galactofuranosyl-(1-&gt;5)-beta-D-galactofuranosyl-(1-&gt;4)-alpha-L-rhamnopyranosyl-(1-&gt;3)-N-acetyl-alpha-D-glucosaminyl-diphospho-trans,octa-cis-decaprenol + 28 UDP + 28 H(+). The protein operates within cell wall biogenesis; cell wall polysaccharide biosynthesis. Involved in the galactan polymerization of the arabinogalactan (AG) region of the mycolylarabinogalactan-peptidoglycan (mAGP) complex, an essential component of the mycobacteria cell wall. Thus, successively transfers approximately 28 galactofuranosyl (Galf) residues from UDP-galactofuranose (UDP-Galf) onto the galactofuranosyl-galactofuranosyl-rhamnosyl-GlcNAc-diphospho-decaprenol (Galf-Galf-Rha-GlcNAc-PP-C50) acceptor produced by GlfT1, with alternating 1-&gt;5 and 1-&gt;6 links, forming a galactan domain with approximately 30 galactofuranosyl residues. This Mycolicibacterium smegmatis (strain ATCC 700084 / mc(2)155) (Mycobacterium smegmatis) protein is Galactofuranosyltransferase GlfT2.